The sequence spans 306 residues: Ornithine carbamoyltransferase (306 aa).

Carbamoyl phosphate is bound by residues 51–54 (STRT), Gln78, Arg102, and 129–132 (HPVQ). Residues Asn157, Asp221, and 225-226 (SM) contribute to the L-ornithine site. Carbamoyl phosphate contacts are provided by residues 261 to 262 (CL) and Arg289.

The protein belongs to the aspartate/ornithine carbamoyltransferase superfamily. OTCase family.

It localises to the cytoplasm. The catalysed reaction is carbamoyl phosphate + L-ornithine = L-citrulline + phosphate + H(+). Its pathway is amino-acid biosynthesis; L-arginine biosynthesis; L-arginine from L-ornithine and carbamoyl phosphate: step 1/3. Functionally, reversibly catalyzes the transfer of the carbamoyl group from carbamoyl phosphate (CP) to the N(epsilon) atom of ornithine (ORN) to produce L-citrulline. The chain is Ornithine carbamoyltransferase from Campylobacter hominis (strain ATCC BAA-381 / DSM 21671 / CCUG 45161 / LMG 19568 / NCTC 13146 / CH001A).